We begin with the raw amino-acid sequence, 306 residues long: MTWPNRDQPAFPSSSSGAFSALPQGVSHGGVNLSSFSDFLRHQAPHLLPGAPGPGPTGLPTDAVPHGTTIVALKCPGGVVMAGDRRATQGNMIASRDVQKVYITDDYTVTGIAGTAAIAVEFARLYAVELEHYEKLEGVALTFPGKVNRLATMVRGNLGAALQGFVALPLLAGYDLDDPNPEAAGRIVSFDAAGGWNFEEEGYQSVGSGSIFAKSSMKKLYSQVTDAESALRVAVEALYDAADDDSATGGPDLVRGIFPTAVVIGADGAHEVPEAKISSLCREVVENRSRTETFGPDARPTRGDEL.

Positions 1–67 (MTWPNRDQPA…GLPTDAVPHG (67 aa)) are cleaved as a propeptide — removed in mature form; by autocatalysis. The active-site Nucleophile is Thr-68.

Belongs to the peptidase T1B family. In terms of assembly, the 20S proteasome core is composed of 14 alpha and 14 beta subunits that assemble into four stacked heptameric rings, resulting in a barrel-shaped structure. The two inner rings, each composed of seven catalytic beta subunits, are sandwiched by two outer rings, each composed of seven alpha subunits. The catalytic chamber with the active sites is on the inside of the barrel. Has a gated structure, the ends of the cylinder being occluded by the N-termini of the alpha-subunits. Is capped by the proteasome-associated ATPase, ARC.

The protein localises to the cytoplasm. The enzyme catalyses Cleavage of peptide bonds with very broad specificity.. Its pathway is protein degradation; proteasomal Pup-dependent pathway. Its activity is regulated as follows. The formation of the proteasomal ATPase ARC-20S proteasome complex, likely via the docking of the C-termini of ARC into the intersubunit pockets in the alpha-rings, may trigger opening of the gate for substrate entry. Interconversion between the open-gate and close-gate conformations leads to a dynamic regulation of the 20S proteasome proteolysis activity. Component of the proteasome core, a large protease complex with broad specificity involved in protein degradation. The chain is Proteasome subunit beta from Mycolicibacterium vanbaalenii (strain DSM 7251 / JCM 13017 / BCRC 16820 / KCTC 9966 / NRRL B-24157 / PYR-1) (Mycobacterium vanbaalenii).